The primary structure comprises 541 residues: Chaperonin GroEL (541 aa).

Residues 29–32, 86–90, Gly413, 478–480, and Asp494 each bind ATP; these read TIGP, DGTTT, and NAA.

Belongs to the chaperonin (HSP60) family. As to quaternary structure, forms a cylinder of 14 subunits composed of two heptameric rings stacked back-to-back. Interacts with the co-chaperonin GroES.

Its subcellular location is the cytoplasm. The enzyme catalyses ATP + H2O + a folded polypeptide = ADP + phosphate + an unfolded polypeptide.. Together with its co-chaperonin GroES, plays an essential role in assisting protein folding. The GroEL-GroES system forms a nano-cage that allows encapsulation of the non-native substrate proteins and provides a physical environment optimized to promote and accelerate protein folding. This chain is Chaperonin GroEL, found in Oenococcus oeni (strain ATCC BAA-331 / PSU-1).